Consider the following 215-residue polypeptide: ATP phosphoribosyltransferase (215 aa).

Belongs to the ATP phosphoribosyltransferase family. Short subfamily. As to quaternary structure, heteromultimer composed of HisG and HisZ subunits.

The protein resides in the cytoplasm. It catalyses the reaction 1-(5-phospho-beta-D-ribosyl)-ATP + diphosphate = 5-phospho-alpha-D-ribose 1-diphosphate + ATP. It functions in the pathway amino-acid biosynthesis; L-histidine biosynthesis; L-histidine from 5-phospho-alpha-D-ribose 1-diphosphate: step 1/9. Catalyzes the condensation of ATP and 5-phosphoribose 1-diphosphate to form N'-(5'-phosphoribosyl)-ATP (PR-ATP). Has a crucial role in the pathway because the rate of histidine biosynthesis seems to be controlled primarily by regulation of HisG enzymatic activity. The polypeptide is ATP phosphoribosyltransferase (hisG) (Clostridium acetobutylicum (strain ATCC 824 / DSM 792 / JCM 1419 / IAM 19013 / LMG 5710 / NBRC 13948 / NRRL B-527 / VKM B-1787 / 2291 / W)).